The sequence spans 152 residues: Phospholipase A2 pkP2 (152 aa).

An N-terminal signal peptide occupies residues methionine 1–alanine 21. A propeptide spanning residues isoleucine 22–leucine 27 is cleaved from the precursor. 7 disulfide bridges follow: cysteine 38/cysteine 104, cysteine 54/cysteine 151, cysteine 56/cysteine 72, cysteine 71/cysteine 132, cysteine 78/cysteine 125, cysteine 88/cysteine 118, and cysteine 111/cysteine 123. The Ca(2+) site is built by tyrosine 55, glycine 57, and glycine 59. Histidine 75 is an active-site residue. A Ca(2+)-binding site is contributed by aspartate 76. The active site involves aspartate 126.

It belongs to the phospholipase A2 family. Group I subfamily. Ca(2+) is required as a cofactor.

Its subcellular location is the secreted. It catalyses the reaction a 1,2-diacyl-sn-glycero-3-phosphocholine + H2O = a 1-acyl-sn-glycero-3-phosphocholine + a fatty acid + H(+). Functionally, PA2 catalyzes the calcium-dependent hydrolysis of the 2-acyl groups in 3-sn-phosphoglycerides. The polypeptide is Phospholipase A2 pkP2 (Laticauda semifasciata (Black-banded sea krait)).